The primary structure comprises 188 residues: dCTP deaminase (188 aa).

Residues 111–116, 135–137, Gln156, Tyr170, and Gln180 each bind dCTP; these read KSTYAR and TLE. The Proton donor/acceptor role is filled by Glu137.

Belongs to the dCTP deaminase family. As to quaternary structure, homotrimer.

It carries out the reaction dCTP + H2O + H(+) = dUTP + NH4(+). It participates in pyrimidine metabolism; dUMP biosynthesis; dUMP from dCTP (dUTP route): step 1/2. Its function is as follows. Catalyzes the deamination of dCTP to dUTP. The chain is dCTP deaminase from Thiobacillus denitrificans (strain ATCC 25259 / T1).